Reading from the N-terminus, the 781-residue chain is Ubiquitin carboxyl-terminal hydrolase 14 (781 aa).

A UBP-type zinc finger spans residues 169–279 (STCPHTENFQ…SALQIYGINI (111 aa)). 12 residues coordinate Zn(2+): Cys-171, His-173, Cys-192, Cys-195, Cys-204, Cys-207, Cys-212, His-224, His-228, His-235, Cys-253, and Cys-256. The USP domain occupies 323 to 781 (CGLINLGNSC…NGYIYFYTRC (459 aa)). The Nucleophile role is filled by Cys-332. UBA domains lie at 576–626 (DEDE…LFQH) and 649–689 (EVDE…VFNN). His-737 serves as the catalytic Proton acceptor.

Belongs to the peptidase C19 family.

The protein localises to the cytoplasm. The protein resides in the nucleus. It carries out the reaction Thiol-dependent hydrolysis of ester, thioester, amide, peptide and isopeptide bonds formed by the C-terminal Gly of ubiquitin (a 76-residue protein attached to proteins as an intracellular targeting signal).. Functionally, required for the adaptation to the presence of glucose in the growth medium; mediates the degradation of enzymes involved in gluconeogenesis when cells are shifted to glucose-containing medium. Required for proteasome-dependent catabolite degradation of fructose-1,6-bisphosphatase (FBP1). Accelerates proteasomal breakdown of ubiquitinated proteins as it disassembles free ubiquitin chains that would compete with ubiquitinated proteins to bind to the proteasome. This Saccharomyces cerevisiae (strain ATCC 204508 / S288c) (Baker's yeast) protein is Ubiquitin carboxyl-terminal hydrolase 14 (UBP14).